The primary structure comprises 202 residues: Large ribosomal subunit protein uL4 (202 aa).

Polar residues predominate over residues 42 to 52 (GTKAQKSRSQV). Residues 42–70 (GTKAQKSRSQVSGTTKKSKKQKGGGARHG) form a disordered region.

The protein belongs to the universal ribosomal protein uL4 family. In terms of assembly, part of the 50S ribosomal subunit.

Its function is as follows. One of the primary rRNA binding proteins, this protein initially binds near the 5'-end of the 23S rRNA. It is important during the early stages of 50S assembly. It makes multiple contacts with different domains of the 23S rRNA in the assembled 50S subunit and ribosome. Functionally, forms part of the polypeptide exit tunnel. This Xylella fastidiosa (strain 9a5c) protein is Large ribosomal subunit protein uL4.